The chain runs to 290 residues: Large ribosomal subunit protein uL2m (290 aa).

This sequence belongs to the universal ribosomal protein uL2 family. In terms of assembly, probably part of the large ribosomal subunit.

It is found in the hydrogenosome. This chain is Large ribosomal subunit protein uL2m (rpl2), found in Nyctotherus ovalis.